The following is a 227-amino-acid chain: Extracellular small neutral protease (227 aa).

Positions 1 to 29 are cleaved as a signal peptide; sequence MRITLPLLSTAVGLGLTAAVLGTGPAATA. A propeptide spanning residues 30–42 is cleaved from the precursor; sequence AAPQEPVRAAQLG. Ca(2+) contacts are provided by Asp156 and Thr158. Zn(2+) is bound at residue His163. Glu164 is an active-site residue. Zn(2+) contacts are provided by His167 and Asp173. Cys179 and Cys192 are oxidised to a cystine.

Belongs to the peptidase M7 family. It depends on Ca(2+) as a cofactor. Requires Zn(2+) as cofactor. The N-terminus is blocked.

It localises to the secreted. It catalyses the reaction Hydrolyzes proteins with a preference for Tyr or Phe in the P1' position. Has no action on amino-acid p-nitroanilides.. This Streptomyces lividans protein is Extracellular small neutral protease (snpA).